Reading from the N-terminus, the 185-residue chain is Threonylcarbamoyl-AMP synthase (185 aa).

The YrdC-like domain maps to 4 to 185 (SWRVQQAARE…LATGKVVRPS (182 aa)).

It belongs to the SUA5 family. TsaC subfamily.

The protein resides in the cytoplasm. It catalyses the reaction L-threonine + hydrogencarbonate + ATP = L-threonylcarbamoyladenylate + diphosphate + H2O. In terms of biological role, required for the formation of a threonylcarbamoyl group on adenosine at position 37 (t(6)A37) in tRNAs that read codons beginning with adenine. Catalyzes the conversion of L-threonine, HCO(3)(-)/CO(2) and ATP to give threonylcarbamoyl-AMP (TC-AMP) as the acyladenylate intermediate, with the release of diphosphate. The sequence is that of Threonylcarbamoyl-AMP synthase from Pseudomonas fluorescens (strain ATCC BAA-477 / NRRL B-23932 / Pf-5).